A 197-amino-acid chain; its full sequence is Ribosome maturation factor RimM (197 aa).

In terms of domain architecture, PRC barrel spans 99-174 (EDEFYQVDLI…LVVEPVAAGL (76 aa)).

The protein belongs to the RimM family. In terms of assembly, binds ribosomal protein uS19.

It is found in the cytoplasm. Its function is as follows. An accessory protein needed during the final step in the assembly of 30S ribosomal subunit, possibly for assembly of the head region. Essential for efficient processing of 16S rRNA. May be needed both before and after RbfA during the maturation of 16S rRNA. It has affinity for free ribosomal 30S subunits but not for 70S ribosomes. The sequence is that of Ribosome maturation factor RimM from Bartonella quintana (strain Toulouse) (Rochalimaea quintana).